A 204-amino-acid chain; its full sequence is Tat proofreading chaperone DmsD (204 aa).

Belongs to the TorD/DmsD family. DmsD subfamily.

In terms of biological role, required for biogenesis/assembly of DMSO reductase, but not for the interaction of the DmsA signal peptide with the Tat system. May be part of a chaperone cascade complex that facilitates a folding-maturation pathway for the substrate protein. The protein is Tat proofreading chaperone DmsD of Escherichia coli O6:H1 (strain CFT073 / ATCC 700928 / UPEC).